The following is a 94-amino-acid chain: MTINYQFGDVDAHGAMIRAQAGSLEAEHQAIISDVLTASDFWGGAGSAACQGFITQLGRNFQVIYEQANAHGQKVQAAGNNMAQTDSAVGSSWA.

The protein belongs to the WXG100 family. ESAT-6 subfamily.

It localises to the secreted. The sequence is that of ESAT-6-like protein EsxI from Mycobacterium tuberculosis (strain ATCC 25618 / H37Rv).